The following is a 147-amino-acid chain: Sec-independent protein translocase protein TatB (147 aa).

The helical transmembrane segment at 1–21 (MFDISFSEILVIAAVALIVIG) threads the bilayer. Positions 67 to 88 (EETGRSIENSVHTELDKFRETV) are enriched in basic and acidic residues. The tract at residues 67–147 (EETGRSIENS…GVNRERETAE (81 aa)) is disordered. Low complexity predominate over residues 103-117 (APAGESSPPQNSSPA).

This sequence belongs to the TatB family. In terms of assembly, the Tat system comprises two distinct complexes: a TatABC complex, containing multiple copies of TatA, TatB and TatC subunits, and a separate TatA complex, containing only TatA subunits. Substrates initially bind to the TatABC complex, which probably triggers association of the separate TatA complex to form the active translocon.

The protein resides in the cell inner membrane. Part of the twin-arginine translocation (Tat) system that transports large folded proteins containing a characteristic twin-arginine motif in their signal peptide across membranes. Together with TatC, TatB is part of a receptor directly interacting with Tat signal peptides. TatB may form an oligomeric binding site that transiently accommodates folded Tat precursor proteins before their translocation. The sequence is that of Sec-independent protein translocase protein TatB from Nitrosospira multiformis (strain ATCC 25196 / NCIMB 11849 / C 71).